Consider the following 385-residue polypeptide: Benzoylsuccinyl-CoA thiolase subunit BbsB (385 aa).

A CoA-binding site is contributed by Arg19. Cys84 (acyl-thioester intermediate) is an active-site residue. CoA contacts are provided by Gly121, Arg193, Cys204, and Cys205.

This sequence belongs to the thiolase-like superfamily. Thiolase family. Heterotetramer composed of two BbsA subunits and two BbsB subunits. BbsB forms homodimeric subcomplexes. Both BbsA and BbsB are essential for enzymatic activity.

It catalyses the reaction (S)-2-benzoylsuccinyl-CoA + CoA = benzoyl-CoA + succinyl-CoA. It participates in xenobiotic degradation; toluene degradation. In terms of biological role, component of the BbsAB thiolase complex, which catalyzes the thiolytic cleavage of (S)-2-benzoylsuccinyl-CoA to succinyl-CoA and benzoyl-CoA, the final step of anaerobic toluene metabolism. The protein is Benzoylsuccinyl-CoA thiolase subunit BbsB of Thauera aromatica.